A 154-amino-acid chain; its full sequence is Small ribosomal subunit protein uS9 (154 aa).

A disordered region spans residues 133–154; that stretch reads RAKESKKYGLKKARKAPQYSKR. A compositionally biased stretch (basic residues) spans 140-154; sequence YGLKKARKAPQYSKR.

The protein belongs to the universal ribosomal protein uS9 family.

This is Small ribosomal subunit protein uS9 from Salinispora tropica (strain ATCC BAA-916 / DSM 44818 / JCM 13857 / NBRC 105044 / CNB-440).